We begin with the raw amino-acid sequence, 593 residues long: Inactive metallocarboxypeptidase ECM14 (593 aa).

An N-terminal signal peptide occupies residues 1–22; it reads MHFSVRLSLLLTLASSLPLVSA. The propeptide occupies 23–184; the sequence is IPQHEDQAYT…QTIYESYPKT (162 aa). The disordered stretch occupies residues 180 to 210; the sequence is SYPKTNPSSPSQQGPTTRRFSPSASTSKTKP. Over residues 182–210 the composition is skewed to polar residues; it reads PKTNPSSPSQQGPTTRRFSPSASTSKTKP. The 327-residue stretch at 220-546 folds into the Peptidase M14 domain; that stretch reads DYQPLSVLLP…RAMVAMGKFL (327 aa). The Zn(2+) site is built by His-285 and Glu-288. Substrate-binding positions include 285–288, Arg-343, and 360–361; these read HARE and DH. An intrachain disulfide couples Cys-354 to Cys-377. A glycan (N-linked (GlcNAc...) asparagine) is linked at Asn-370. His-417 contributes to the Zn(2+) binding site. 418 to 419 serves as a coordination point for substrate; sequence SY. The interval 557–593 is disordered; that stretch reads NGPHAAEETQNYDDDFEEDEAEEDSDVFRAQGDDMSS. Positions 566–581 are enriched in acidic residues; the sequence is QNYDDDFEEDEAEEDS.

This sequence belongs to the peptidase M14 family. Zn(2+) serves as cofactor.

The protein resides in the vacuole. It is found in the secreted. Inactive carboxypeptidase that may play a role in cell wall organization and biogenesis. The polypeptide is Inactive metallocarboxypeptidase ECM14 (ECM14) (Arthroderma gypseum (strain ATCC MYA-4604 / CBS 118893) (Microsporum gypseum)).